The primary structure comprises 328 residues: C-type lectin domain family 4 member K (328 aa).

At Met-1–Arg-43 the chain is on the cytoplasmic side. The helical; Signal-anchor for type II membrane protein transmembrane segment at Ala-44–Tyr-64 threads the bilayer. The Extracellular segment spans residues Pro-65 to Pro-328. N-linked (GlcNAc...) asparagine glycans are attached at residues Asn-87, Asn-113, and Asn-180. Positions Glu-145–Asp-190 form a coiled coil. In terms of domain architecture, C-type lectin spans Phe-202 to Lys-320. Disulfide bonds link Cys-223–Cys-319 and Cys-295–Cys-311.

In terms of assembly, homotrimer. In terms of tissue distribution, exclusively expressed by Langerhans cells. Expressed in astrocytoma and malignant ependymoma, but not in normal brain tissues.

It is found in the membrane. Its function is as follows. Calcium-dependent lectin displaying mannose-binding specificity. Induces the formation of Birbeck granules (BGs); is a potent regulator of membrane superimposition and zippering. Binds to sulfated as well as mannosylated glycans, keratan sulfate (KS) and beta-glucans. Facilitates uptake of antigens and is involved in the routing and/or processing of antigen for presentation to T cells. Major receptor on primary Langerhans cells for Candida species, Saccharomyces species, and Malassezia furfur. Protects against human immunodeficiency virus-1 (HIV-1) infection. Binds to high-mannose structures present on the envelope glycoprotein which is followed by subsequent targeting of the virus to the Birbeck granules leading to its rapid degradation. The polypeptide is C-type lectin domain family 4 member K (CD207) (Homo sapiens (Human)).